The primary structure comprises 96 residues: HssA/B-like protein 25 (96 aa).

This sequence belongs to the hssA/B family.

This is HssA/B-like protein 25 (hssl25) from Dictyostelium discoideum (Social amoeba).